The primary structure comprises 1020 residues: C2 and GRAM domain-containing protein At1g03370 (1020 aa).

Residues 1 to 102 (MKLQVRVVEA…ENQSLGTVWY (102 aa)) form the C2 1 domain. The Ca(2+) site is built by D17, D23, D69, D71, and D77. 2 stretches are compositionally biased toward polar residues: residues 134–144 (TSSGDQTSASR) and 158–172 (TCAS…SSIP). Residues 134–172 (TSSGDQTSASRSPDLRLESPIDPSTCASPSRSDDASSIP) form a disordered region. The 173-residue stretch at 249-421 (SGGVVVDQLF…LLAQSVKPVD (173 aa)) folds into the VASt 1 domain. Residues 454–474 (FTVLSTFLIGIYVFVHIVFAI) form a helical membrane-spanning segment. The region spanning 517 to 635 (QARKQKGSDH…NISDLADVWV (119 aa)) is the C2 2 domain. The Ca(2+) site is built by D551, D557, D604, F605, and D606. The GRAM domain occupies 689 to 752 (AFQKLFGLPQ…LWEDIEEIQV (64 aa)). Positions 848-1010 (RFSEVFSLTL…MTFGFLEKEY (163 aa)) constitute a VASt 2 domain.

The cofactor is Ca(2+).

The protein localises to the membrane. In Arabidopsis thaliana (Mouse-ear cress), this protein is C2 and GRAM domain-containing protein At1g03370.